Here is a 353-residue protein sequence, read N- to C-terminus: MASGKMRIVVLFGGRSAEHDVSVLSATNVMNALDPAKYEAVPVFVTRAGQWLLSRFVNGALEKPSSGAELCLVPGGCGRAIVVPDAGAPYEADKIDIIFPVLHGLHGEDGAVQGLAQVARVPLAGCGIPGSANALDKDIAKRLVNEAGLSTAKSVTITREEVPAFSALEQALGLPIFIKPARQGSSVGVHKVVTEADYQAAMSDGFIYDDKLLAEEFIQAREVECGVLEDEGGALFVSRAGEIVPAESHCFYSYDAKYIDADGTEIKVPAELPEQVENEIRAIAAKAFRVLGCDSMARVDFFVTADRRIVLNEINTIPGFTDMSMYFKVMAVSGVSYPEIINRLVAHGLARGS.

One can recognise an ATP-grasp domain in the interval 141 to 346 (KRLVNEAGLS…YPEIINRLVA (206 aa)). 169 to 224 (EQALGLPIFIKPARQGSSVGVHKVVTEADYQAAMSDGFIYDDKLLAEEFIQAREVE) contacts ATP. Mg(2+) contacts are provided by Asp-300, Glu-313, and Asn-315.

This sequence belongs to the D-alanine--D-alanine ligase family. Requires Mg(2+) as cofactor. Mn(2+) serves as cofactor.

It localises to the cytoplasm. The enzyme catalyses 2 D-alanine + ATP = D-alanyl-D-alanine + ADP + phosphate + H(+). It participates in cell wall biogenesis; peptidoglycan biosynthesis. Cell wall formation. The chain is D-alanine--D-alanine ligase A from Brucella melitensis biotype 1 (strain ATCC 23456 / CCUG 17765 / NCTC 10094 / 16M).